Here is a 376-residue protein sequence, read N- to C-terminus: Succinyl-diaminopimelate desuccinylase (376 aa).

Residue His66 participates in Zn(2+) binding. Asp68 is a catalytic residue. Asp99 contacts Zn(2+). The Proton acceptor role is filled by Glu133. 3 residues coordinate Zn(2+): Glu134, Glu162, and His348.

Belongs to the peptidase M20A family. DapE subfamily. In terms of assembly, homodimer. It depends on Zn(2+) as a cofactor. The cofactor is Co(2+).

The catalysed reaction is N-succinyl-(2S,6S)-2,6-diaminopimelate + H2O = (2S,6S)-2,6-diaminopimelate + succinate. It functions in the pathway amino-acid biosynthesis; L-lysine biosynthesis via DAP pathway; LL-2,6-diaminopimelate from (S)-tetrahydrodipicolinate (succinylase route): step 3/3. Its function is as follows. Catalyzes the hydrolysis of N-succinyl-L,L-diaminopimelic acid (SDAP), forming succinate and LL-2,6-diaminopimelate (DAP), an intermediate involved in the bacterial biosynthesis of lysine and meso-diaminopimelic acid, an essential component of bacterial cell walls. The protein is Succinyl-diaminopimelate desuccinylase of Xanthomonas euvesicatoria pv. vesicatoria (strain 85-10) (Xanthomonas campestris pv. vesicatoria).